We begin with the raw amino-acid sequence, 402 residues long: Putative PDZ domain-containing protein PDZK1P1 (402 aa).

PDZ domains follow at residues Arg12–Glu93 and Ile121–Glu206. The disordered stretch occupies residues Gly230–Lys258. Over residues Pro240–Asp250 the composition is skewed to polar residues. The PDZ 3 domain occupies Leu261 to Lys341. The disordered stretch occupies residues Asp362–Met402. Over residues Pro365–His387 the composition is skewed to basic and acidic residues. The segment covering Ser388 to Met402 has biased composition (low complexity).

The protein belongs to the NHER family.

This is Putative PDZ domain-containing protein PDZK1P1 from Homo sapiens (Human).